Reading from the N-terminus, the 397-residue chain is Acetate kinase (397 aa).

N8 provides a ligand contact to Mg(2+). ATP is bound at residue K15. Residue R92 participates in substrate binding. The Proton donor/acceptor role is filled by D149. ATP-binding positions include 209-213, 283-285, and 331-335; these read HLGNG, DFR, and GVGEN. A Mg(2+)-binding site is contributed by E385.

Belongs to the acetokinase family. In terms of assembly, homodimer. Requires Mg(2+) as cofactor. Mn(2+) is required as a cofactor.

It is found in the cytoplasm. It catalyses the reaction acetate + ATP = acetyl phosphate + ADP. It participates in metabolic intermediate biosynthesis; acetyl-CoA biosynthesis; acetyl-CoA from acetate: step 1/2. Catalyzes the formation of acetyl phosphate from acetate and ATP. Can also catalyze the reverse reaction. This is Acetate kinase from Corynebacterium glutamicum (strain R).